Reading from the N-terminus, the 302-residue chain is uncharacterized protein (302 aa).

The interval 1-24 (MTEISELASSSQKPEKTKYNLPKP) is disordered.

This is an uncharacterized protein from Schizosaccharomyces pombe (strain 972 / ATCC 24843) (Fission yeast).